The following is a 55-amino-acid chain: Large ribosomal subunit protein bL33 (55 aa).

The protein belongs to the bacterial ribosomal protein bL33 family.

The polypeptide is Large ribosomal subunit protein bL33 (Mycobacterium leprae (strain Br4923)).